The sequence spans 603 residues: Penicillin-binding protein activator LpoA (603 aa).

An N-terminal signal peptide occupies residues 1–24 (MINHKRLSVPRILTPVALAITLAA). A lipid anchor (N-palmitoyl cysteine) is attached at cysteine 25. The S-diacylglycerol cysteine moiety is linked to residue cysteine 25.

Belongs to the LpoA family. In terms of assembly, interacts with PBP1a.

Its subcellular location is the cell outer membrane. Functionally, regulator of peptidoglycan synthesis that is essential for the function of penicillin-binding protein 1A (PBP1a). The chain is Penicillin-binding protein activator LpoA from Vibrio antiquarius (strain Ex25).